The sequence spans 96 residues: Small ribosomal subunit protein bS18 (96 aa).

The protein belongs to the bacterial ribosomal protein bS18 family. Part of the 30S ribosomal subunit. Forms a tight heterodimer with protein bS6.

Its function is as follows. Binds as a heterodimer with protein bS6 to the central domain of the 16S rRNA, where it helps stabilize the platform of the 30S subunit. This chain is Small ribosomal subunit protein bS18, found in Borreliella burgdorferi (strain ATCC 35210 / DSM 4680 / CIP 102532 / B31) (Borrelia burgdorferi).